The following is a 444-amino-acid chain: Glycine receptor subunit alphaZ1 (444 aa).

A signal peptide spans 1–24 (MFALGIYLWETIVFFSLAASQQAA). Topologically, residues 25–246 (ARKAASPMPP…RFHLERQMGY (222 aa)) are extracellular. The N-linked (GlcNAc...) asparagine glycan is linked to Asn-62. Residues Arg-89 and Ser-153 each contribute to the glycine site. An intrachain disulfide couples Cys-162 to Cys-176. Residues Glu-216 and Asp-218 each contribute to the Zn(2+) site. Cys-222 and Cys-233 are oxidised to a cystine. 226–231 (YNTGKF) lines the strychnine pocket. Thr-228 lines the glycine pocket. His-239 is a Zn(2+) binding site. A helical transmembrane segment spans residues 247-268 (YLIQMYIPSLLIVILSWVSFWI). The Cytoplasmic portion of the chain corresponds to 269–273 (NMDAA). The chain crosses the membrane as a helical span at residues 274–294 (PARVGLGITTVLTMTTQSSGS). The Extracellular segment spans residues 295–305 (RASLPKVSYVK). Residues 306–326 (AIDIWMAVCLLFVFSALLEYA) form a helical membrane-spanning segment. The Cytoplasmic portion of the chain corresponds to 327–412 (AVNFIARQHK…FISRAKRIDT (86 aa)). A helical transmembrane segment spans residues 413-433 (VSRVAFPLVFLIFNIFYWITY). At 434–444 (KIIRSEDIHKQ) the chain is on the extracellular side.

The protein belongs to the ligand-gated ion channel (TC 1.A.9) family. Glycine receptor (TC 1.A.9.3) subfamily. GLRA1 sub-subfamily. Homopentamer (in vitro). Heteropentamer composed of glra1 and glrb. Both homopentamers and heteropentamers form functional ion channels. Interacts with glrb. Expressed in brain.

It localises to the postsynaptic cell membrane. The protein resides in the synapse. The protein localises to the perikaryon. It is found in the cell projection. Its subcellular location is the dendrite. It localises to the cell membrane. The catalysed reaction is chloride(in) = chloride(out). Its activity is regulated as follows. Activated by glycine and taurine. Inhibited by strychnine. Allosterically activated by ivermectin. Inhibited by picrotoxinin. Strychnine binding locks the channel in a closed conformation and prevents channel opening in response to extracellular glycine. Can also be activated by GABA and inhibited by bicuculline, but this requires heterologous expression in human cells. In terms of biological role, subunit of heteromeric glycine-gated chloride channels. Plays an important role in the down-regulation of neuronal excitability. Contributes to the generation of inhibitory postsynaptic currents. Channel activity is potentiated by ethanol. In Danio rerio (Zebrafish), this protein is Glycine receptor subunit alphaZ1 (glra1).